The sequence spans 484 residues: Falcipain-2a (484 aa).

At 1–35 (MDYNMDYAPHEVISQQGERFVDKYVDRKILKNKKS) the chain is on the cytoplasmic side. Residues 1–243 (MDYNMDYAPH…PLKNSKYLLD (243 aa)) constitute a propeptide, activation peptide. The short motif at 16 to 25 (QGERFVDKYV) is the Bipartite vacuolar targeting signal 1 element. A helical; Signal-anchor for type II membrane protein transmembrane segment spans residues 36–56 (LLVIISLSVLSVVGFVLFYFT). Residues 57 to 484 (PNSRKSDLFK…GTDAFIPLIE (428 aa)) lie on the Lumenal side of the membrane. Asn67 carries N-linked (GlcNAc...) asparagine glycosylation. A Bipartite vacuolar targeting signal 2 motif is present at residues 84–105 (KSPNGKKFIVSKIDEALSFYDS). Positions 244–260 (QMNYEEVIKKYKGNENF) match the Nose motif; required for the correct folding of the mature form motif. 4 cysteine pairs are disulfide-bonded: Cys282–Cys323, Cys316–Cys357, Cys342–Cys362, and Cys411–Cys472. Cys285 is a catalytic residue. Residue His417 is part of the active site. Residues 428-437 (EIVNPLTKKG) carry the Arm motif; binds to host hemoglobin and required for the inhibitory interaction between the propeptide and the catalytic domain motif. Asn447 is an active-site residue.

This sequence belongs to the peptidase C1 family. As to quaternary structure, component of the hemozoin formation complex (HFC) composed of falcipains FP2A and/or FP2B, plasmepsins PMII, PMIII/HAP and PMIV, heme detoxifying protein HDP and falcilysin FLN. The HFC complex is involved in hemoglobin degradation and detoxification of heme in the food vacuole during the asexual blood stage. Auto-cleaved to remove the propeptide.

It localises to the vacuole. Its subcellular location is the membrane. With respect to regulation, inhibited by cysteine protease inhibitor ICP. Inhibited by heme and heme analogs. Functionally, cysteine protease which cleaves native host hemoglobin and globin in the food vacuole during the asexual blood stage. The binding to host hemoglobin is pH-sensitive and only occurs at acidic pH. Cleaves ankyrin and protein 4.1, two components of host erythrocyte membrane cytoskeleton required for the stability of the erythrocyte membrane, and thus may be involved in parasite release. Preferentially cleaves substrates which have an arginine or lysine at the P1 position and a leucine or phenylalanine at the P2 position. The sequence is that of Falcipain-2a from Plasmodium falciparum (isolate 3D7).